A 240-amino-acid chain; its full sequence is Glutamine amidotransferase-like protein chry6 (240 aa).

Residues 13-205 (NFILDDTGGR…FVASDNPVLV (193 aa)) enclose the Glutamine amidotransferase type-1 domain. Cysteine 102 serves as the catalytic Nucleophile. Catalysis depends on residues histidine 185 and glutamate 187.

It belongs to the peptidase C26 family.

Its pathway is pigment biosynthesis. Functionally, glutamine amidotransferase-like protein; part of the gene cluster that mediates the biosynthesis of the yellow pigment chrysogine. Pyruvic acid and anthranilic acid are likely substrates for the nonribosomal peptide synthetase chry1/NRPS14, with pyruvic acid adenylated by the first A domain and anthranilic acid by the second. If pyruvic acid and anthranilic acid are merged and released from chry1/NRPS14 by hydrolysis, a subsequent amidation would lead to 2-pyruvoylaminobenzamide. This process is probably catalyzed by the amidotransferase chry2 using glutamine as amino donor. The dehydrogenase chry5 that has a terminal berberine bridge domain for C-N cyclization could catalyze the cyclization of 2-pyruvoylaminobenzamide to yield acetyl-4(3H)-quinazolidinone. A final reduction of acetyl-4(3H)-quinazolidinone catalyzed by the oxidoreductase chry4 would result in chrysogine. The chain is Glutamine amidotransferase-like protein chry6 from Gibberella zeae (strain ATCC MYA-4620 / CBS 123657 / FGSC 9075 / NRRL 31084 / PH-1) (Wheat head blight fungus).